Here is an 88-residue protein sequence, read N- to C-terminus: Small ribosomal subunit protein bS20 (88 aa).

The tract at residues methionine 1 to arginine 25 is disordered.

The protein belongs to the bacterial ribosomal protein bS20 family.

Functionally, binds directly to 16S ribosomal RNA. The protein is Small ribosomal subunit protein bS20 of Azorhizobium caulinodans (strain ATCC 43989 / DSM 5975 / JCM 20966 / LMG 6465 / NBRC 14845 / NCIMB 13405 / ORS 571).